A 333-amino-acid polypeptide reads, in one-letter code: tRNA-dihydrouridine(16) synthase (333 aa).

Residues 19–21 (PMQ) and glutamine 80 contribute to the FMN site. Cysteine 110 acts as the Proton donor in catalysis. FMN contacts are provided by residues lysine 151, 211-213 (NGD), and 235-236 (GR).

The protein belongs to the Dus family. DusC subfamily. The cofactor is FMN.

The catalysed reaction is 5,6-dihydrouridine(16) in tRNA + NADP(+) = uridine(16) in tRNA + NADPH + H(+). It catalyses the reaction 5,6-dihydrouridine(16) in tRNA + NAD(+) = uridine(16) in tRNA + NADH + H(+). Catalyzes the synthesis of 5,6-dihydrouridine (D), a modified base found in the D-loop of most tRNAs, via the reduction of the C5-C6 double bond in target uridines. Specifically modifies U16 in tRNAs. The chain is tRNA-dihydrouridine(16) synthase from Neisseria meningitidis serogroup B (strain ATCC BAA-335 / MC58).